The chain runs to 352 residues: Uroporphyrinogen decarboxylase (352 aa).

Residues 26-30, aspartate 76, tyrosine 153, serine 208, and histidine 323 each bind substrate; that span reads RQAGR.

This sequence belongs to the uroporphyrinogen decarboxylase family. As to quaternary structure, homodimer.

It is found in the cytoplasm. The catalysed reaction is uroporphyrinogen III + 4 H(+) = coproporphyrinogen III + 4 CO2. It participates in porphyrin-containing compound metabolism; protoporphyrin-IX biosynthesis; coproporphyrinogen-III from 5-aminolevulinate: step 4/4. In terms of biological role, catalyzes the decarboxylation of four acetate groups of uroporphyrinogen-III to yield coproporphyrinogen-III. The chain is Uroporphyrinogen decarboxylase from Synechococcus sp. (strain CC9605).